A 305-amino-acid chain; its full sequence is Putative glutamine amidotransferase MTH_191 (305 aa).

The active site involves C2. The Glutamine amidotransferase type-2 domain maps to 2–305 (CGIAGVVYKD…SPGEVRVYEI (304 aa)).

The polypeptide is Putative glutamine amidotransferase MTH_191 (Methanothermobacter thermautotrophicus (strain ATCC 29096 / DSM 1053 / JCM 10044 / NBRC 100330 / Delta H) (Methanobacterium thermoautotrophicum)).